A 193-amino-acid chain; its full sequence is ATP-dependent Clp protease proteolytic subunit (193 aa).

Ser98 (nucleophile) is an active-site residue. The active site involves His123.

This sequence belongs to the peptidase S14 family. Fourteen ClpP subunits assemble into 2 heptameric rings which stack back to back to give a disk-like structure with a central cavity, resembling the structure of eukaryotic proteasomes.

Its subcellular location is the cytoplasm. The enzyme catalyses Hydrolysis of proteins to small peptides in the presence of ATP and magnesium. alpha-casein is the usual test substrate. In the absence of ATP, only oligopeptides shorter than five residues are hydrolyzed (such as succinyl-Leu-Tyr-|-NHMec, and Leu-Tyr-Leu-|-Tyr-Trp, in which cleavage of the -Tyr-|-Leu- and -Tyr-|-Trp bonds also occurs).. Functionally, cleaves peptides in various proteins in a process that requires ATP hydrolysis. Has a chymotrypsin-like activity. Plays a major role in the degradation of misfolded proteins. This is ATP-dependent Clp protease proteolytic subunit from Histophilus somni (strain 2336) (Haemophilus somnus).